The primary structure comprises 428 residues: Glutamyl-tRNA reductase (428 aa).

Residues 50-53 (TCNR), Ser-110, 115-117 (ETQ), and Gln-121 contribute to the substrate site. The active-site Nucleophile is the Cys-51. 190–195 (GAGEMG) lines the NADP(+) pocket.

Belongs to the glutamyl-tRNA reductase family. In terms of assembly, homodimer.

It carries out the reaction (S)-4-amino-5-oxopentanoate + tRNA(Glu) + NADP(+) = L-glutamyl-tRNA(Glu) + NADPH + H(+). It functions in the pathway porphyrin-containing compound metabolism; protoporphyrin-IX biosynthesis; 5-aminolevulinate from L-glutamyl-tRNA(Glu): step 1/2. In terms of biological role, catalyzes the NADPH-dependent reduction of glutamyl-tRNA(Glu) to glutamate 1-semialdehyde (GSA). The chain is Glutamyl-tRNA reductase from Campylobacter curvus (strain 525.92).